The following is a 204-amino-acid chain: UPF0215 protein MTH_1316 (204 aa).

This sequence belongs to the UPF0215 family.

The chain is UPF0215 protein MTH_1316 from Methanothermobacter thermautotrophicus (strain ATCC 29096 / DSM 1053 / JCM 10044 / NBRC 100330 / Delta H) (Methanobacterium thermoautotrophicum).